The primary structure comprises 463 residues: Methionine aminopeptidase 2-1 (463 aa).

Residues M1–F98 form a disordered region. The segment covering R30 to H45 has biased composition (basic and acidic residues). Acidic residues predominate over residues G46 to D55. The segment covering K69–A81 has biased composition (basic residues). H214 is a substrate binding site. A divalent metal cation-binding residues include D235, D246, and H315. H323 is a binding site for substrate. Positions 348 and 444 each coordinate a divalent metal cation.

This sequence belongs to the peptidase M24A family. Methionine aminopeptidase eukaryotic type 2 subfamily. Co(2+) is required as a cofactor. Requires Zn(2+) as cofactor. The cofactor is Mn(2+). It depends on Fe(2+) as a cofactor.

The protein resides in the cytoplasm. It carries out the reaction Release of N-terminal amino acids, preferentially methionine, from peptides and arylamides.. Functionally, cotranslationally removes the N-terminal methionine from nascent proteins. The N-terminal methionine is often cleaved when the second residue in the primary sequence is small and uncharged (Met-Ala-, Cys, Gly, Pro, Ser, Thr, or Val). This chain is Methionine aminopeptidase 2-1, found in Colletotrichum graminicola (strain M1.001 / M2 / FGSC 10212) (Maize anthracnose fungus).